We begin with the raw amino-acid sequence, 265 residues long: Pyrroline-5-carboxylate reductase (265 aa).

It belongs to the pyrroline-5-carboxylate reductase family.

It localises to the cytoplasm. The catalysed reaction is L-proline + NADP(+) = (S)-1-pyrroline-5-carboxylate + NADPH + 2 H(+). It carries out the reaction L-proline + NAD(+) = (S)-1-pyrroline-5-carboxylate + NADH + 2 H(+). The protein operates within amino-acid biosynthesis; L-proline biosynthesis; L-proline from L-glutamate 5-semialdehyde: step 1/1. In terms of biological role, catalyzes the reduction of 1-pyrroline-5-carboxylate (PCA) to L-proline. The sequence is that of Pyrroline-5-carboxylate reductase from Aquifex aeolicus (strain VF5).